The primary structure comprises 197 residues: uncharacterized protein (197 aa).

The segment covering Met-1 to Ser-10 has biased composition (polar residues). Disordered regions lie at residues Met-1–Ser-46 and Leu-54–Arg-73. Residues Leu-18 to Glu-37 are compositionally biased toward basic and acidic residues. The segment covering Asp-58–Pro-69 has biased composition (polar residues). Transmembrane regions (helical) follow at residues Asn-83–Trp-105 and Ala-120–Leu-142.

This sequence belongs to the WTF family.

It localises to the endoplasmic reticulum membrane. This is an uncharacterized protein from Schizosaccharomyces pombe (strain 972 / ATCC 24843) (Fission yeast).